Reading from the N-terminus, the 791-residue chain is Centrosomal protein of 89 kDa (791 aa).

The interval 27–203 (APKPAVPRTP…HTQQKDVKHS (177 aa)) is disordered. Residues 30 to 45 (PAVPRTPPPRSPNPSP) show a composition bias toward pro residues. Residue S50 is modified to Phosphoserine. Residues 50-62 (SALAAAILATTLT) show a composition bias toward low complexity. Over residues 75 to 89 (SRSESDASDIEKDSF) the composition is skewed to basic and acidic residues. Over residues 94–107 (ATTSELRLRQSWQN) the composition is skewed to polar residues. A compositionally biased stretch (basic and acidic residues) spans 137 to 161 (RESESTWKDVGDGRDATYTVPHRDQ). The segment covering 181-190 (SDSSSSSSSS) has biased composition (low complexity). 3 coiled-coil regions span residues 252–291 (SANQALSCELSALRQAMKDLQLKLKLVEKDNRKLKETEKA), 370–598 (LLAY…MGKE), and 670–737 (HRLK…SLLQ).

It localises to the cytoplasm. It is found in the cytosol. The protein localises to the cytoskeleton. Its subcellular location is the microtubule organizing center. The protein resides in the centrosome. It localises to the spindle pole. It is found in the centriole. The protein localises to the mitochondrion intermembrane space. In terms of biological role, required for ciliogenesis. Also plays a role in mitochondrial metabolism where it may modulate complex IV activity. This Mus musculus (Mouse) protein is Centrosomal protein of 89 kDa (Cep89).